Reading from the N-terminus, the 882-residue chain is Probable LRR receptor-like serine/threonine-protein kinase At1g12460 (882 aa).

The signal sequence occupies residues 1–21; it reads MRKVHLFLVLVHFIYISTSRS. Residues 22-515 lie on the Extracellular side of the membrane; the sequence is DSISERDILL…SRNSDALSIS (494 aa). Asparagine 76 carries N-linked (GlcNAc...) asparagine glycosylation. LRR repeat units lie at residues 92–113, 116–138, 140–162, 165–187, 189–210, 213–235, 237–258, 261–283, 285–308, 309–331, 333–355, 357–379, 381–404, 405–427, 429–451, and 453–475; these read FIRV…DYFK, TLWT…ISEL, SLRF…LFKF, KTKF…IVNC, NLVG…RICD, VLEY…IQKC, RLIL…AVLT, NITY…VDCS, SLEF…MGCK, SLKL…IGKM, SLSV…IGSL, FLQV…ISNC, VLLE…LNLT, NIKI…LGNL, KVQF…LGSL, and TLTH…PMIQ. Asparagine 121 carries N-linked (GlcNAc...) asparagine glycosylation. Asparagine 261 and asparagine 266 each carry an N-linked (GlcNAc...) asparagine glycan. Asparagine 321 and asparagine 341 each carry an N-linked (GlcNAc...) asparagine glycan. Residues asparagine 402, asparagine 417, and asparagine 426 are each glycosylated (N-linked (GlcNAc...) asparagine). Asparagine 458 and asparagine 463 each carry an N-linked (GlcNAc...) asparagine glycan. A helical membrane pass occupies residues 516 to 536; it reads VIIVIIAAAVILFGVCIVLAL. Residues 537 to 882 lie on the Cytoplasmic side of the membrane; that stretch reads NLRARKRRKD…LESIRNGFGS (346 aa). Threonine 589 bears the Phosphothreonine mark. Positions 593–876 constitute a Protein kinase domain; sequence LDKENIIGMG…AEVVQVLESI (284 aa). Residues 599–607 and lysine 621 each bind ATP; that span reads IGMGSIGSV. Tyrosine 770 bears the Phosphotyrosine mark.

The protein belongs to the protein kinase superfamily. Ser/Thr protein kinase family.

The protein localises to the cell membrane. The catalysed reaction is L-seryl-[protein] + ATP = O-phospho-L-seryl-[protein] + ADP + H(+). The enzyme catalyses L-threonyl-[protein] + ATP = O-phospho-L-threonyl-[protein] + ADP + H(+). The polypeptide is Probable LRR receptor-like serine/threonine-protein kinase At1g12460 (Arabidopsis thaliana (Mouse-ear cress)).